The sequence spans 193 residues: 3-isopropylmalate dehydratase small subunit (193 aa).

This sequence belongs to the LeuD family. LeuD type 1 subfamily. As to quaternary structure, heterodimer of LeuC and LeuD.

The enzyme catalyses (2R,3S)-3-isopropylmalate = (2S)-2-isopropylmalate. It participates in amino-acid biosynthesis; L-leucine biosynthesis; L-leucine from 3-methyl-2-oxobutanoate: step 2/4. Its function is as follows. Catalyzes the isomerization between 2-isopropylmalate and 3-isopropylmalate, via the formation of 2-isopropylmaleate. In Bacillus thuringiensis subsp. konkukian (strain 97-27), this protein is 3-isopropylmalate dehydratase small subunit.